The primary structure comprises 80 residues: Clavanin-E (80 aa).

The N-terminal stretch at 1–19 is a signal peptide; the sequence is MKTTILILLILGLGINAKS. Positions 20–29 are excised as a propeptide; it reads LEERKSEEEK. At phenylalanine 52 the chain carries Phenylalanine amide. Positions 54-80 are excised as a propeptide; the sequence is DDQQDNGKFYGYYAEDNGKHWYDTGDQ.

The protein resides in the secreted. Functionally, has antimicrobial activity. This Styela clava (Sea squirt) protein is Clavanin-E.